We begin with the raw amino-acid sequence, 178 residues long: ATP-dependent protease subunit HslV (178 aa).

Residue Thr2 is part of the active site. Positions 159, 162, and 165 each coordinate Na(+).

The protein belongs to the peptidase T1B family. HslV subfamily. A double ring-shaped homohexamer of HslV is capped on each side by a ring-shaped HslU homohexamer. The assembly of the HslU/HslV complex is dependent on binding of ATP.

The protein localises to the cytoplasm. The enzyme catalyses ATP-dependent cleavage of peptide bonds with broad specificity.. Allosterically activated by HslU binding. Functionally, protease subunit of a proteasome-like degradation complex believed to be a general protein degrading machinery. In Buchnera aphidicola subsp. Cinara cedri (strain Cc), this protein is ATP-dependent protease subunit HslV.